The primary structure comprises 630 residues: tRNA uridine 5-carboxymethylaminomethyl modification enzyme MnmG (630 aa).

13–18 is a binding site for FAD; it reads GGGHAG. NAD(+) is bound at residue 273 to 287; sequence GPRYCPSIEDKIHRF.

Belongs to the MnmG family. In terms of assembly, homodimer. Heterotetramer of two MnmE and two MnmG subunits. Requires FAD as cofactor.

It localises to the cytoplasm. In terms of biological role, NAD-binding protein involved in the addition of a carboxymethylaminomethyl (cmnm) group at the wobble position (U34) of certain tRNAs, forming tRNA-cmnm(5)s(2)U34. This Pseudomonas aeruginosa (strain ATCC 15692 / DSM 22644 / CIP 104116 / JCM 14847 / LMG 12228 / 1C / PRS 101 / PAO1) protein is tRNA uridine 5-carboxymethylaminomethyl modification enzyme MnmG.